A 290-amino-acid polypeptide reads, in one-letter code: OTU domain-containing protein 6A (290 aa).

The tract at residues 27-117 is disordered; it reads QTLKASVPKN…RRHQERMPAA (91 aa). Residues 49-68 are compositionally biased toward basic and acidic residues; sequence SRLEAEMEQRHKQELEKFGE. The segment covering 95 to 108 has biased composition (basic residues); it reads KAQKRRDRRAHQER. Positions 142 to 276 constitute an OTU domain; the sequence is LEMKTIPADG…GEHYNSVKPI (135 aa). The interval 147–153 is cys-loop; it reads IPADGHC. The active site involves aspartate 150. The active-site Nucleophile is the cysteine 153. The variable-loop stretch occupies residues 211 to 221; the sequence is IVHNASWGGQL. Residues 259–269 form a his-loop region; sequence YLHYACDFGEH. Histidine 269 is a catalytic residue.

It catalyses the reaction Thiol-dependent hydrolysis of ester, thioester, amide, peptide and isopeptide bonds formed by the C-terminal Gly of ubiquitin (a 76-residue protein attached to proteins as an intracellular targeting signal).. Deubiquitinating enzyme that hydrolyzes 'Lys-27'-, 'Lys-29'- and 'Lys-33'-linked polyubiquitin chains. Also able to hydrolyze 'Lys-11'-linked ubiquitin chains. In Mus musculus (Mouse), this protein is OTU domain-containing protein 6A (Otud6a).